Consider the following 398-residue polypeptide: Isopenicillin N epimerase (398 aa).

An N6-(pyridoxal phosphate)lysine modification is found at Lys219. The interval 243–264 (PQVSWGYRPDGENPSDERNRFG) is disordered. Positions 251–264 (PDGENPSDERNRFG) are enriched in basic and acidic residues.

This sequence belongs to the class-V pyridoxal-phosphate-dependent aminotransferase family. Pyridoxal 5'-phosphate serves as cofactor.

The catalysed reaction is isopenicillin N = penicillin N. Its pathway is antibiotic biosynthesis; cephalosporin C biosynthesis. Its function is as follows. Catalyzes the reversible isomerization between isopenicillin N and penicillin N. The polypeptide is Isopenicillin N epimerase (cefD) (Amycolatopsis lactamdurans (Nocardia lactamdurans)).